The following is a 180-amino-acid chain: MKGTSEVKPMETHRKLLKPLVEKRRRERINNSLEKLRIFLFQTLKSEKLKNPKVEKAEILECTVQFLQSRKLLPLDREAVDKEYQSGFQHCLETTLHFMNSKPDMNGVTKELLSHQMSSCKSPSDAWSPNCAPLTKHVPSLSYQDSAPHLVSNSISISPTKTLVDSHFTYQSFKTWRPWV.

The 58-residue stretch at 13 to 70 (HRKLLKPLVEKRRRERINNSLEKLRIFLFQTLKSEKLKNPKVEKAEILECTVQFLQSR) folds into the bHLH domain. Residues 84–116 (YQSGFQHCLETTLHFMNSKPDMNGVTKELLSHQ) enclose the Orange domain. Residues 176–179 (WRPW) carry the WRPW motif motif.

Transcription repression requires formation of a complex with a corepressor protein of the Groucho/TLE family. As to expression, expressed in the presumptive midbrain-hindbrain boundary (MHB) as early as the early gastrula stage (stage 10.5). Expression in the MHB continues through to tailbud stage. Also transiently expressed in the eye anlage at late neurula stage.

Its subcellular location is the nucleus. In terms of biological role, transcriptional repressor. Represses transcription from both N box- and E box-containing promoters. Demarcates the prospective midbrain-hindbrain boundary (MHB) region in the neuroectoderm in early gastrulae embryos by repressing transcription of a number of target genes. The chain is Transcription factor HES-7.1-A (hes7.1-a) from Xenopus laevis (African clawed frog).